The chain runs to 346 residues: Leucine zipper protein 2 (346 aa).

An N-terminal signal peptide occupies residues Met1–Ser19. The stretch at Leu16–Gln211 forms a coiled coil. The N-linked (GlcNAc...) asparagine glycan is linked to Asn133. A leucine-zipper region spans residues Leu164 to Leu192. Disordered stretches follow at residues Gln221–Pro240 and Pro248–Leu346. Over residues Ala250 to Ser261 the composition is skewed to low complexity. Residues Gly262–Asp283 show a composition bias toward polar residues. A glycan (N-linked (GlcNAc...) asparagine) is linked at Asn264. Positions Asp286 to Ser298 are enriched in basic and acidic residues. A glycan (N-linked (GlcNAc...) asparagine) is linked at Asn302.

It localises to the secreted. In Homo sapiens (Human), this protein is Leucine zipper protein 2 (LUZP2).